The following is a 412-amino-acid chain: Serine hydroxymethyltransferase (412 aa).

(6S)-5,6,7,8-tetrahydrofolate contacts are provided by residues Leu117 and 121 to 123 (GHL). N6-(pyridoxal phosphate)lysine is present on Lys226. Residues Glu242 and 350 to 352 (SPF) each bind (6S)-5,6,7,8-tetrahydrofolate.

Belongs to the SHMT family. In terms of assembly, homodimer. The cofactor is pyridoxal 5'-phosphate.

It localises to the cytoplasm. It carries out the reaction (6R)-5,10-methylene-5,6,7,8-tetrahydrofolate + glycine + H2O = (6S)-5,6,7,8-tetrahydrofolate + L-serine. It functions in the pathway one-carbon metabolism; tetrahydrofolate interconversion. The protein operates within amino-acid biosynthesis; glycine biosynthesis; glycine from L-serine: step 1/1. Catalyzes the reversible interconversion of serine and glycine with tetrahydrofolate (THF) serving as the one-carbon carrier. Also exhibits THF-independent aldolase activity toward beta-hydroxyamino acids, producing glycine and aldehydes, via a retro-aldol mechanism. The chain is Serine hydroxymethyltransferase from Methanosarcina mazei (strain ATCC BAA-159 / DSM 3647 / Goe1 / Go1 / JCM 11833 / OCM 88) (Methanosarcina frisia).